A 168-amino-acid polypeptide reads, in one-letter code: Small ribosomal subunit protein uS4 (168 aa).

Positions 103-167 constitute an S4 RNA-binding domain; that stretch reads RRLQTIVYKK…SPFKKSIEEK (65 aa).

Belongs to the universal ribosomal protein uS4 family. As to quaternary structure, part of the 30S ribosomal subunit. Contacts protein S5. The interaction surface between S4 and S5 is involved in control of translational fidelity.

One of the primary rRNA binding proteins, it binds directly to 16S rRNA where it nucleates assembly of the body of the 30S subunit. Functionally, with S5 and S12 plays an important role in translational accuracy. The polypeptide is Small ribosomal subunit protein uS4 (Staphylothermus marinus (strain ATCC 43588 / DSM 3639 / JCM 9404 / F1)).